We begin with the raw amino-acid sequence, 977 residues long: Synaptopodin 2-like protein (977 aa).

A PDZ domain is found at 6-88; sequence EVLVTLSGGA…QLVLTVQRLA (83 aa). Disordered regions lie at residues 91–226, 317–352, and 364–677; these read GPVQ…GPLR, AGTG…QSDW, and AGSR…EDAL. 2 positions are modified to phosphoserine: Ser108 and Ser111. A compositionally biased stretch (pro residues) spans 109-123; that stretch reads PLSPEPPGAPVPQPL. At Thr141 the chain carries Phosphothreonine. Phosphoserine is present on residues Ser143, Ser178, and Ser180. Residues 183-192 are compositionally biased toward pro residues; sequence EPAPTIPGPP. A compositionally biased stretch (polar residues) spans 194–203; that stretch reads QGDSRVSSPS. Positions 216–226 are enriched in low complexity; it reads EALLLPHGPLR. 5 positions are modified to phosphoserine: Ser345, Ser350, Ser374, Ser381, and Ser384. An Omega-N-methylarginine modification is found at Arg386. Pro residues predominate over residues 436–450; sequence PPSPLPAPVASPRPF. Omega-N-methylarginine occurs at positions 466, 469, and 479. Residues 510–525 show a composition bias toward polar residues; sequence LSSQGPTPLPSFTSGV. Composition is skewed to low complexity over residues 530-545 and 572-595; these read PVSG…GPVT and SAAA…ARPE. Pro residues predominate over residues 596 to 607; the sequence is APAPGPGAPEPP. A phosphoserine mark is found at Ser670 and Ser678. The segment at 697-802 is disordered; that stretch reads TLPHVTPKTP…PSLPPSWKYS (106 aa). Positions 704–730 are enriched in pro residues; the sequence is KTPPPMAPKTPPPMTPKTPPPVAPKPP. Phosphothreonine occurs at positions 705 and 713. Arg757 bears the Omega-N-methylarginine mark. Positions 781–796 are enriched in pro residues; the sequence is GLGPRPRSPSPTPSLP. Ser788 and Ser790 each carry phosphoserine. Thr792 bears the Phosphothreonine mark. 3 positions are modified to omega-N-methylarginine: Arg806, Arg826, and Arg889. Ser891 is subject to Phosphoserine. 2 positions are modified to phosphothreonine: Thr892 and Thr898. Arg910 is modified (omega-N-methylarginine). Arg921 carries the asymmetric dimethylarginine; alternate modification. At Arg921 the chain carries Omega-N-methylarginine; alternate. The interval 922–950 is disordered; it reads TELASAPVPSPAPPPEAPRGLGASPSSCG. A compositionally biased stretch (pro residues) spans 929–938; that stretch reads VPSPAPPPEA. Omega-N-methylarginine occurs at positions 955 and 957.

Belongs to the synaptopodin family.

The protein resides in the cytoplasm. It localises to the cytoskeleton. Its function is as follows. Actin-associated protein that may play a role in modulating actin-based shape. The sequence is that of Synaptopodin 2-like protein (SYNPO2L) from Homo sapiens (Human).